The sequence spans 208 residues: Riboflavin synthase (208 aa).

2 Lumazine-binding repeats span residues 1-97 (MFTG…MGGH) and 98-195 (IISG…VDTT). 2,4-dihydroxypteridine-binding positions include 4 to 6 (GIV), 48 to 50 (CLT), 62 to 67 (DIMKIT), 101 to 103 (GHI), K137, 146 to 148 (SLT), and 160 to 165 (SIIPET).

Homotrimer.

The catalysed reaction is 2 6,7-dimethyl-8-(1-D-ribityl)lumazine + H(+) = 5-amino-6-(D-ribitylamino)uracil + riboflavin. It participates in cofactor biosynthesis; riboflavin biosynthesis; riboflavin from 2-hydroxy-3-oxobutyl phosphate and 5-amino-6-(D-ribitylamino)uracil: step 2/2. In terms of biological role, catalyzes the dismutation of two molecules of 6,7-dimethyl-8-ribityllumazine, resulting in the formation of riboflavin and 5-amino-6-(D-ribitylamino)uracil. The polypeptide is Riboflavin synthase (ribE) (Buchnera aphidicola subsp. Schizaphis graminum (strain Sg)).